A 904-amino-acid chain; its full sequence is Serine/arginine repetitive matrix protein 1 (904 aa).

Met1 is subject to N-acetylmethionine. Residues 1–151 form a necessary for DNA and RNA-binding region; sequence MDAGFFRGTS…ASMKKQDEDK (151 aa). The necessary for mRNA 3'-end cleavage and cytoplasmic accumulation stretch occupies residues 1–156; sequence MDAGFFRGTS…QDEDKDKRDK (156 aa). Position 7 is a citrulline (Arg7). One can recognise a PWI domain in the interval 27–126; the sequence is QLKFAECLEK…AGIPSAFLEL (100 aa). Lys127 is covalently cross-linked (Glycyl lysine isopeptide (Lys-Gly) (interchain with G-Cter in SUMO2)). Basic and acidic residues predominate over residues 139 to 170; that stretch reads EKLASMKKQDEDKDKRDKEEKESSREKRERSR. Residues 139-904 form a disordered region; that stretch reads EKLASMKKQD…MRKAQVSPQS (766 aa). Lys140 is subject to N6-acetyllysine. Residues 171–207 show a composition bias toward basic residues; sequence SPRRRKSRSPSPRRRSSPVRRERKRSHSRSPRHRTKS. Residues 214–234 are compositionally biased toward basic and acidic residues; the sequence is PEKKEKTPELPEPSVKVKEPS. Thr220 bears the Phosphothreonine mark. Phosphoserine is present on Ser227. A Glycyl lysine isopeptide (Lys-Gly) (interchain with G-Cter in SUMO1); alternate cross-link involves residue Lys231. Lys231 is covalently cross-linked (Glycyl lysine isopeptide (Lys-Gly) (interchain with G-Cter in SUMO2); alternate). A phosphoserine mark is found at Ser234 and Ser240. A Phosphothreonine modification is found at Thr241. The segment covering 246–275 has biased composition (basic and acidic residues); the sequence is KVPKPEPIPEPKEPSPEKNSKKEKEKEKTR. Lys249 participates in a covalent cross-link: Glycyl lysine isopeptide (Lys-Gly) (interchain with G-Cter in SUMO2). A Phosphoserine modification is found at Ser260. Composition is skewed to basic residues over residues 276-329 and 336-351; these read PRSR…RTPP and PRHR…RRRS. The interval 300 to 688 is necessary for speckles and matrix localization; sequence RRHRSRSRSY…NKRHSPSPRP (389 aa). Positions 352–368 are enriched in low complexity; the sequence is SASLSGSSSSSSSSRSR. Ser389, Ser391, Ser393, and Ser402 each carry phosphoserine. Position 406 is a phosphothreonine (Thr406). Residue Ser414 is modified to Phosphoserine. Thr416 carries the post-translational modification Phosphothreonine. Phosphoserine is present on residues Ser420, Ser429, Ser431, and Ser436. The segment covering 428 to 438 has biased composition (polar residues); it reads VSVSPGRTSGK. Residue Lys447 forms a Glycyl lysine isopeptide (Lys-Gly) (interchain with G-Cter in SUMO2) linkage. Phosphoserine occurs at positions 450 and 452. Residue Lys459 forms a Glycyl lysine isopeptide (Lys-Gly) (interchain with G-Cter in SUMO2) linkage. Phosphoserine is present on residues Ser463 and Ser465. Residue Lys472 forms a Glycyl lysine isopeptide (Lys-Gly) (interchain with G-Cter in SUMO2) linkage. Ser478 carries the phosphoserine modification. The segment covering 478–501 has biased composition (low complexity); the sequence is SVQQRRQYRRQNQQSSSDSGSSSS. Residues 503-518 show a composition bias toward basic and acidic residues; that stretch reads EDERPKRSHVKNGEVG. 7 positions are modified to phosphoserine: Ser524, Ser526, Ser528, Ser530, Ser532, Ser549, and Ser551. Residues 533-560 show a composition bias toward basic residues; the sequence is PRKRQKETSPRGRRRRSPSPPPTRRRRS. Residue Thr555 is modified to Phosphothreonine. Phosphoserine occurs at positions 560 and 562. Residues 567 to 592 are compositionally biased toward basic residues; that stretch reads PRRRRTPTPPPRRRTPSPPPRRRSPS. Residues Thr572, Thr574, and Thr581 each carry the phosphothreonine modification. Residue Ser583 is modified to Phosphoserine. A compositionally biased stretch (low complexity) spans 593 to 605; sequence PRRYSPPIQRRYS. The residue at position 596 (Tyr596) is a Phosphotyrosine. A phosphoserine mark is found at Ser597, Ser605, and Ser607. Phosphothreonine is present on Thr614. 5 positions are modified to phosphoserine: Ser616, Ser626, Ser628, Ser636, and Ser638. Positions 621–636 are enriched in basic residues; that stretch reads PKRRASPSPPPKRRVS. Residues 649–663 are compositionally biased toward basic residues; it reads TKRRSPSLSSKHRKG. Residues Ser694, Ser695, Ser696, Ser705, Ser707, Ser713, and Ser715 each carry the phosphoserine modification. 2 stretches are compositionally biased toward low complexity: residues 701-719 and 736-759; these read RRGA…PSTR and AASP…SPEP. Phosphothreonine is present on Thr718. Residues Ser738, Ser740, Ser748, Ser752, Ser754, Ser756, Ser769, Ser773, Ser775, and Ser777 each carry the phosphoserine modification. Positions 771–786 are enriched in low complexity; sequence VQSQSPSTNWSPAVPV. Phosphothreonine is present on Thr778. A phosphoserine mark is found at Ser781 and Ser791. Phosphothreonine is present on Thr793. A phosphoserine mark is found at Ser795, Ser797, and Ser802. The segment covering 809–834 has biased composition (basic residues); sequence KKKKKKKDKKHKKDKKHKKHKKHKKE. A compositionally biased stretch (low complexity) spans 837 to 866; sequence VAAAAAAAVTPAAIAAATTTLAQEEPVAAP. Residue Lys869 forms a Glycyl lysine isopeptide (Lys-Gly) (interchain with G-Cter in SUMO2) linkage. Thr872 carries the post-translational modification Phosphothreonine. At Ser874 the chain carries Phosphoserine. Basic and acidic residues predominate over residues 882–892; that stretch reads DLEKHLREKAL. Phosphoserine is present on Ser901.

It belongs to the splicing factor SR family. As to quaternary structure, identified in the spliceosome C complex. Found in a pre-mRNA splicing complex with SFRS4, SFRS5, SNRP70, SNRPA1, SRRM1 and SRRM2. Found in a pre-mRNA exonic splicing enhancer (ESE) complex with SNRP70, SNRPA1, SRRM1 and TRA2B/SFRS10. Component of the minor spliceosome, which splices U12-type introns. Found in a mRNA splicing-dependent exon junction complex (EJC) with DEK, PRPF8, NCBP1, RBM8A, RNPS1, SRRM1 and ALYREF/THOC4. Interacts with DDX39B, CPSF1, RBM8A, RNPS1, and ALYREF/THOC4. Seems to be a compound of RNA export complexes that are released from speckles in a ATP-dependent manner. In terms of processing, phosphorylated on multiple serine and threonine residues by DYRK3 during the G2-to-M transition, after the nuclear-envelope breakdown. Phosphorylation by DYRK3 promotes disassembly of nuclear speckles. Citrullinated by PADI4.

The protein resides in the nucleus matrix. The protein localises to the nucleus speckle. Its function is as follows. Part of pre- and post-splicing multiprotein mRNP complexes. As a component of the minor spliceosome, involved in the splicing of U12-type introns in pre-mRNAs. Involved in numerous pre-mRNA processing events. Promotes constitutive and exonic splicing enhancer (ESE)-dependent splicing activation by bridging together sequence-specific (SR family proteins, SFRS4, SFRS5 and TRA2B/SFRS10) and basal snRNP (SNRP70 and SNRPA1) factors of the spliceosome. Stimulates mRNA 3'-end cleavage independently of the formation of an exon junction complex. Binds both pre-mRNA and spliced mRNA 20-25 nt upstream of exon-exon junctions. Binds RNA and DNA with low sequence specificity and has similar preference for either double- or single-stranded nucleic acid substrates. The protein is Serine/arginine repetitive matrix protein 1 (SRRM1) of Homo sapiens (Human).